We begin with the raw amino-acid sequence, 399 residues long: MAREKFERNKPHVNIGTIGHVDHGKTTLTAAITSVLAKKGQAKVQDYAEIDGAPEERERGITINTAHVEYETDGRHYAHVDCPGHADYVKNMITGAAQMDGAILVCAATDGPMAQTKEHILLAKQVGVPALVVALNKCDMVDDEEIIELVEMEIRELLSSYDFPGDDIPIVQVSGLKAIEGEAEWEAKIDELMDAVDTSIPEPEREIEKPFLMAVEDVFSITGRGTVATGRIERGKVKKGEEIEIVGIRDSRKTTVTGVEMFRKDLDEGLAGDNCGLLLRGIEKEDIERGMVLVKPGSITPHTKFEGQVYVLKKEEGGRHTPFFAGYRPQFYIRTTDVTGQITAFTAEDGSNVEMVMPGDNIKMTGELICPVAIEQGMRFAIREGGRTIGAGVVSKIIQ.

The region spanning Lys10–Glu204 is the tr-type G domain. Residues Gly19–Thr26 form a G1 region. Gly19–Thr26 provides a ligand contact to GTP. Residue Thr26 participates in Mg(2+) binding. The tract at residues Gly60 to Asn64 is G2. The G3 stretch occupies residues Asp81–Gly84. Residues Asp81 to His85 and Asn136 to Asp139 contribute to the GTP site. The interval Asn136–Asp139 is G4. The G5 stretch occupies residues Ser174–Leu176.

It belongs to the TRAFAC class translation factor GTPase superfamily. Classic translation factor GTPase family. EF-Tu/EF-1A subfamily. In terms of assembly, monomer.

It localises to the cytoplasm. It catalyses the reaction GTP + H2O = GDP + phosphate + H(+). GTP hydrolase that promotes the GTP-dependent binding of aminoacyl-tRNA to the A-site of ribosomes during protein biosynthesis. This is Elongation factor Tu from Prochlorococcus marinus (strain MIT 9303).